The following is a 203-amino-acid chain: Ras-related protein RABG3b (203 aa).

GTP is bound at residue 15 to 22 (GDSGVGKT). An Effector region motif is present at residues 37 to 45 (YKATIGADF). GTP is bound by residues 63–67 (DTAGQ), 125–128 (NKVD), and 158–159 (SA). Residues C201 and C203 are each lipidated (S-geranylgeranyl cysteine). Residue C203 is modified to Cysteine methyl ester.

This sequence belongs to the small GTPase superfamily. Rab family. In terms of assembly, interacts with VPS39. In terms of tissue distribution, expressed in xylem cells of inflorescence stems.

Its subcellular location is the cell membrane. Its function is as follows. Intracellular vesicle trafficking and protein transport. Functions in autophagy. Involved in xylem and tracheary element differentiation. In Arabidopsis thaliana (Mouse-ear cress), this protein is Ras-related protein RABG3b (RABG3B).